A 426-amino-acid polypeptide reads, in one-letter code: Phosphoribosylamine--glycine ligase (426 aa).

One can recognise an ATP-grasp domain in the interval 113–320; it reads KSLMTEAKIP…LLELLYRAST (208 aa). 139 to 200 serves as a coordination point for ATP; that stretch reads LESKSIPIVI…EEFMEGQEAS (62 aa). The Mg(2+) site is built by Glu-290 and Asn-292.

This sequence belongs to the GARS family. Mg(2+) is required as a cofactor. It depends on Mn(2+) as a cofactor.

It catalyses the reaction 5-phospho-beta-D-ribosylamine + glycine + ATP = N(1)-(5-phospho-beta-D-ribosyl)glycinamide + ADP + phosphate + H(+). The protein operates within purine metabolism; IMP biosynthesis via de novo pathway; N(1)-(5-phospho-D-ribosyl)glycinamide from 5-phospho-alpha-D-ribose 1-diphosphate: step 2/2. This chain is Phosphoribosylamine--glycine ligase, found in Leptospira interrogans serogroup Icterohaemorrhagiae serovar copenhageni (strain Fiocruz L1-130).